A 537-amino-acid chain; its full sequence is Glucans biosynthesis protein D (537 aa).

The tat-type signal signal peptide spans 1–30; the sequence is MLMYRRDFLKSVTAAWVAFGLPNPLGGAFA.

Belongs to the OpgD/OpgG family. Predicted to be exported by the Tat system. The position of the signal peptide cleavage has not been experimentally proven.

It localises to the periplasm. The protein operates within glycan metabolism; osmoregulated periplasmic glucan (OPG) biosynthesis. Its function is as follows. Probably involved in the control of the structural glucose backbone of osmoregulated periplasmic glucans (OPGs). The protein is Glucans biosynthesis protein D of Xylella fastidiosa (strain M12).